Consider the following 176-residue polypeptide: Large ribosomal subunit protein uL6 (176 aa).

It belongs to the universal ribosomal protein uL6 family. As to quaternary structure, part of the 50S ribosomal subunit.

Functionally, this protein binds to the 23S rRNA, and is important in its secondary structure. It is located near the subunit interface in the base of the L7/L12 stalk, and near the tRNA binding site of the peptidyltransferase center. This Shewanella sediminis (strain HAW-EB3) protein is Large ribosomal subunit protein uL6.